The primary structure comprises 223 residues: 26S proteasome non-ATPase regulatory subunit 9 (223 aa).

Basic and acidic residues predominate over residues 103–121 (RDKEKQARDMAEAHKEAMS). A disordered region spans residues 103–141 (RDKEKQARDMAEAHKEAMSRKLGQSESQGPPRAFAKVNS). The region spanning 108–195 (QARDMAEAHK…KPLNVTVIRR (88 aa)) is the PDZ domain. Phosphoserine is present on Ser-129.

It belongs to the proteasome subunit p27 family. As to quaternary structure, interacts with PSMC3. Part of a transient complex (modulator) containing PSMD9, PSMC6 and PSMC3 formed during the assembly of the 26S proteasome. In terms of tissue distribution, expressed in all tissues tested, highly expressed in liver and kidney.

Its function is as follows. Acts as a chaperone during the assembly of the 26S proteasome, specifically of the base subcomplex of the PA700/19S regulatory complex (RC). During the base subcomplex assembly is part of an intermediate PSMD9:PSMC6:PSMC3 module, also known as modulator trimer complex; PSMD9 is released during the further base assembly process. The polypeptide is 26S proteasome non-ATPase regulatory subunit 9 (PSMD9) (Homo sapiens (Human)).